The following is a 234-amino-acid chain: uncharacterized protein (234 aa).

LRR repeat units follow at residues 44-63, 64-84, 85-107, and 111-134; these read LEFL…LPKL, KLRK…EKCP, NLTH…PLKQ, and LKSL…VFKL. Residues 161 to 234 form a disordered region; it reads EGLDDEEEGE…GEEERGQKRK (74 aa). The segment covering 163-226 has biased composition (acidic residues); sequence LDDEEEGEHE…GEEDEEELGE (64 aa).

Belongs to the ANP32 family. As to expression, expressed in activated stem cells, such as mobilized CD34+ cells and cord blood CD34+ cells, but not in resting bone marrow CD34+ cells. Expressed in a variety of neoplastic cell lines, mainly in prostatic adenocarcinoma cell lines. Not expressed in normal prostatic tissue.

This is an uncharacterized protein from Homo sapiens (Human).